Consider the following 426-residue polypeptide: Dihydrofolate synthase/folylpolyglutamate synthase (426 aa).

58–61 contacts ATP; that stretch reads GKGS. Residue S82 participates in Mg(2+) binding. 121–124 is a binding site for 7,8-dihydropteroate; the sequence is TRFE. E145 lines the Mg(2+) pocket. 152–154 provides a ligand contact to 7,8-dihydropteroate; it reads LDA. Mg(2+) is bound at residue H172. ATP contacts are provided by R289 and D302.

Belongs to the folylpolyglutamate synthase family. As to quaternary structure, monomer. It depends on Mg(2+) as a cofactor.

It catalyses the reaction 7,8-dihydropteroate + L-glutamate + ATP = 7,8-dihydrofolate + ADP + phosphate + H(+). It carries out the reaction (6S)-5,6,7,8-tetrahydrofolyl-(gamma-L-Glu)(n) + L-glutamate + ATP = (6S)-5,6,7,8-tetrahydrofolyl-(gamma-L-Glu)(n+1) + ADP + phosphate + H(+). The enzyme catalyses 10-formyltetrahydrofolyl-(gamma-L-Glu)(n) + L-glutamate + ATP = 10-formyltetrahydrofolyl-(gamma-L-Glu)(n+1) + ADP + phosphate + H(+). The catalysed reaction is (6R)-5,10-methylenetetrahydrofolyl-(gamma-L-Glu)(n) + L-glutamate + ATP = (6R)-5,10-methylenetetrahydrofolyl-(gamma-L-Glu)(n+1) + ADP + phosphate + H(+). Its pathway is cofactor biosynthesis; tetrahydrofolate biosynthesis; 7,8-dihydrofolate from 2-amino-4-hydroxy-6-hydroxymethyl-7,8-dihydropteridine diphosphate and 4-aminobenzoate: step 2/2. It participates in cofactor biosynthesis; tetrahydrofolylpolyglutamate biosynthesis. Its function is as follows. Functions in two distinct reactions of the de novo folate biosynthetic pathway. Catalyzes the addition of a glutamate residue to dihydropteroate (7,8-dihydropteroate or H2Pte) to form dihydrofolate (7,8-dihydrofolate monoglutamate or H2Pte-Glu). Also catalyzes successive additions of L-glutamate to tetrahydrofolate or 10-formyltetrahydrofolate or 5,10-methylenetetrahydrofolate, leading to folylpolyglutamate derivatives. This Buchnera aphidicola subsp. Baizongia pistaciae (strain Bp) protein is Dihydrofolate synthase/folylpolyglutamate synthase (folC).